The sequence spans 85 residues: Small ribosomal subunit protein uS17 (85 aa).

The protein belongs to the universal ribosomal protein uS17 family. Part of the 30S ribosomal subunit.

In terms of biological role, one of the primary rRNA binding proteins, it binds specifically to the 5'-end of 16S ribosomal RNA. The chain is Small ribosomal subunit protein uS17 from Spiroplasma citri.